The sequence spans 87 residues: Small ribosomal subunit protein bS18 (87 aa).

Belongs to the bacterial ribosomal protein bS18 family. As to quaternary structure, part of the 30S ribosomal subunit. Forms a tight heterodimer with protein bS6.

Its function is as follows. Binds as a heterodimer with protein bS6 to the central domain of the 16S rRNA, where it helps stabilize the platform of the 30S subunit. This is Small ribosomal subunit protein bS18 from Sulfurovum sp. (strain NBC37-1).